Reading from the N-terminus, the 277-residue chain is Large ribosomal subunit protein mL46 (277 aa).

Lys-228 carries the N6-acetyllysine modification.

Belongs to the mitochondrion-specific ribosomal protein mL46 family. Component of the mitochondrial ribosome large subunit (39S) which comprises a 16S rRNA and about 50 distinct proteins.

It localises to the mitochondrion. The polypeptide is Large ribosomal subunit protein mL46 (MRPL46) (Bos taurus (Bovine)).